Reading from the N-terminus, the 629-residue chain is Serine/threonine-protein kinase ICK (629 aa).

In terms of domain architecture, Protein kinase spans 4 to 284 (YTTIKQLGDG…ASQALRYPYF (281 aa)). ATP is bound by residues 10–18 (LGDGTYGSV) and Lys-33. Asp-125 functions as the Proton acceptor in the catalytic mechanism. The residue at position 157 (Thr-157) is a Phosphothreonine. At Tyr-159 the chain carries Phosphotyrosine. Ser-161 carries the phosphoserine modification. 3 disordered regions span residues 292-322 (ISTQ…PAQA), 454-482 (PSEP…QSTA), and 579-629 (GYSS…PSRR). The span at 309 to 321 (GPPPYVKPAPPAQ) shows a compositional bias: pro residues. The span at 460-482 (TGTSVSTQASSQRRDTPTLQSTA) shows a compositional bias: polar residues.

The protein belongs to the protein kinase superfamily. CMGC Ser/Thr protein kinase family. CDC2/CDKX subfamily. Mg(2+) is required as a cofactor. In terms of processing, autophosphorylated on serine and threonine residues. Phosphorylation at Thr-157 increases kinase activity. In terms of tissue distribution, expressed in embryonic heart from day 11. Highly expressed in the uterus and at lower levels in brain, heart, lung, kidney, skeletal muscle, ovary and liver in adult tissues.

Its subcellular location is the cytoplasm. The protein localises to the cell projection. The protein resides in the cilium. It is found in the nucleus. It localises to the cytoskeleton. Its subcellular location is the cilium basal body. It carries out the reaction L-seryl-[protein] + ATP = O-phospho-L-seryl-[protein] + ADP + H(+). The enzyme catalyses L-threonyl-[protein] + ATP = O-phospho-L-threonyl-[protein] + ADP + H(+). Functionally, required for ciliogenesis, particularly in neuronal and retinal progenitor cells. Phosphorylates KIF3A. Involved in the control of ciliary length. Regulates the ciliary localization of SHH pathway components as well as the localization of IFT components at ciliary tips. May play a role in cardiac development. Regulates intraflagellar transport (IFT) speed and negatively regulates cilium length in a cAMP and mTORC1 signaling-dependent manner and this regulation requires its kinase activity. The chain is Serine/threonine-protein kinase ICK (Cilk1) from Rattus norvegicus (Rat).